A 315-amino-acid chain; its full sequence is Hydrogenase-4 component C (315 aa).

Topologically, residues 1-10 (MRQTLCDGYL) are periplasmic. A helical transmembrane segment spans residues 11-31 (VIFALAQAVILLMLTPLFTGI). The Cytoplasmic portion of the chain corresponds to 32 to 73 (SRQIRARMHSRRGPGIWQDYRDIHKLFKRQEVAPTSSGLMFR). A helical transmembrane segment spans residues 74–94 (LMPWVLISSMLVLAMALPLFI). Residues 95–98 (TVSP) are Periplasmic-facing. A helical membrane pass occupies residues 99-119 (FAGGGDLITLIYLLALFRFFF). Over 120–140 (ALSGLDTGSPFAGVGASRELT) the chain is Cytoplasmic. The chain crosses the membrane as a helical span at residues 141–161 (LGILVEPMLILSLLVLALIAG). At 162 to 181 (STHIEMISNTLAMGWNSPLT) the chain is on the periplasmic side. A helical transmembrane segment spans residues 182–202 (TVLALLACGFACFIEMGKIPF). Residues 203-228 (DVAEAEQELQEGPLTEYSGAGLALAK) lie on the Cytoplasmic side of the membrane. Residues 229 to 249 (WGLGLKQVVMASLFVALFLPF) form a helical membrane-spanning segment. At 250–256 (GRAQELS) the chain is on the periplasmic side. Residues 257-277 (LACLLTSLVVTLLKVLLIFVL) form a helical membrane-spanning segment. The Cytoplasmic segment spans residues 278–289 (ASIAENTLARGR). The chain crosses the membrane as a helical span at residues 290–310 (FLLIHHVTWLGFSLAALAWVF). The Periplasmic segment spans residues 311–315 (WLTGL).

It belongs to the complex I subunit 1 family.

It localises to the cell inner membrane. Its function is as follows. Possible component of hydrogenase 4. The polypeptide is Hydrogenase-4 component C (Escherichia coli (strain K12)).